A 367-amino-acid chain; its full sequence is Flagellar P-ring protein (367 aa).

The first 22 residues, 1-22, serve as a signal peptide directing secretion; it reads MRRMLVIRWILAIHLIATQVFA.

Belongs to the FlgI family. The basal body constitutes a major portion of the flagellar organelle and consists of four rings (L,P,S, and M) mounted on a central rod.

It localises to the periplasm. The protein localises to the bacterial flagellum basal body. Functionally, assembles around the rod to form the L-ring and probably protects the motor/basal body from shearing forces during rotation. The protein is Flagellar P-ring protein of Legionella pneumophila (strain Corby).